The primary structure comprises 237 residues: Uridylate kinase (237 aa).

11 to 14 (KLSG) contributes to the ATP binding site. Glycine 53 serves as a coordination point for UMP. Residues glycine 54 and arginine 58 each contribute to the ATP site. UMP is bound by residues aspartate 73 and 134–141 (TGNPFFTT). The ATP site is built by threonine 161, tyrosine 167, and aspartate 170.

Belongs to the UMP kinase family. Homohexamer.

It is found in the cytoplasm. It catalyses the reaction UMP + ATP = UDP + ADP. Its pathway is pyrimidine metabolism; CTP biosynthesis via de novo pathway; UDP from UMP (UMPK route): step 1/1. Its activity is regulated as follows. Inhibited by UTP. In terms of biological role, catalyzes the reversible phosphorylation of UMP to UDP. This Burkholderia mallei (strain NCTC 10247) protein is Uridylate kinase.